The primary structure comprises 126 residues: Histone H2B type 1-J (126 aa).

The segment covering 1–12 (MPEPAKSAPAPK) has biased composition (low complexity). The segment at 1 to 35 (MPEPAKSAPAPKKGSKKAVTKAQKKDGKKRKRSRK) is disordered. Pro-2 carries the N-acetylproline modification. Glu-3 is modified (ADP-ribosyl glutamic acid). Residue Lys-6 is modified to N6-(2-hydroxyisobutyryl)lysine; alternate. Lys-6 bears the N6-(beta-hydroxybutyryl)lysine; alternate mark. Position 6 is an N6-acetyllysine; alternate (Lys-6). Lys-6 is modified (N6-butyryllysine; alternate). N6-crotonyllysine; alternate is present on Lys-6. At Lys-6 the chain carries N6-lactoyllysine; alternate. Residue Lys-6 forms a Glycyl lysine isopeptide (Lys-Gly) (interchain with G-Cter in SUMO2); alternate linkage. Ser-7 carries the ADP-ribosylserine modification. N6-(beta-hydroxybutyryl)lysine; alternate is present on Lys-12. N6-acetyllysine; alternate is present on residues Lys-12 and Lys-13. An N6-crotonyllysine; alternate mark is found at Lys-12 and Lys-13. The residue at position 12 (Lys-12) is an N6-lactoyllysine; alternate. Residue Lys-13 is modified to N6-(2-hydroxyisobutyryl)lysine; alternate. At Ser-15 the chain carries Phosphoserine; by STK4/MST1. An N6-acetyllysine; alternate mark is found at Lys-16, Lys-17, Lys-21, and Lys-24. 4 positions are modified to N6-crotonyllysine; alternate: Lys-16, Lys-17, Lys-21, and Lys-24. An N6-lactoyllysine; alternate mark is found at Lys-16, Lys-17, Lys-21, and Lys-24. 2 positions are modified to N6-(beta-hydroxybutyryl)lysine; alternate: Lys-17 and Lys-21. Position 17 is an N6-glutaryllysine; alternate (Lys-17). An N6-(2-hydroxyisobutyryl)lysine; alternate mark is found at Lys-21 and Lys-24. An N6-butyryllysine; alternate modification is found at Lys-21. Residue Lys-21 forms a Glycyl lysine isopeptide (Lys-Gly) (interchain with G-Cter in SUMO2); alternate linkage. The residue at position 25 (Lys-25) is an N6-(2-hydroxyisobutyryl)lysine. Lys-35 is subject to N6-(2-hydroxyisobutyryl)lysine; alternate. Residue Lys-35 is modified to N6-(beta-hydroxybutyryl)lysine; alternate. Residue Lys-35 is modified to N6-crotonyllysine; alternate. Lys-35 is subject to N6-glutaryllysine; alternate. Lys-35 is subject to N6-succinyllysine; alternate. Residue Lys-35 forms a Glycyl lysine isopeptide (Lys-Gly) (interchain with G-Cter in ubiquitin); alternate linkage. Glu-36 bears the PolyADP-ribosyl glutamic acid mark. At Ser-37 the chain carries Phosphoserine; by AMPK. 3 positions are modified to N6-(2-hydroxyisobutyryl)lysine; alternate: Lys-44, Lys-47, and Lys-58. Lys-44 carries the post-translational modification N6-lactoyllysine; alternate. Residues Lys-44 and Lys-47 each carry the N6-glutaryllysine; alternate modification. N6-methyllysine; alternate is present on Lys-47. Residue Lys-58 is modified to N6,N6-dimethyllysine; alternate. A Dimethylated arginine modification is found at Arg-80. Lys-86 is subject to N6-(2-hydroxyisobutyryl)lysine; alternate. Residue Lys-86 is modified to N6-(beta-hydroxybutyryl)lysine; alternate. N6-acetyllysine; alternate is present on Lys-86. An N6-lactoyllysine; alternate modification is found at Lys-86. Lys-86 carries the post-translational modification N6,N6,N6-trimethyllysine; alternate. Arg-87 and Arg-93 each carry omega-N-methylarginine. Lys-109 carries the N6-(2-hydroxyisobutyryl)lysine; alternate modification. Lys-109 carries the post-translational modification N6-lactoyllysine; alternate. Lys-109 is modified (N6-glutaryllysine; alternate). Lys-109 is modified (N6-methyllysine; alternate). An O-linked (GlcNAc) serine glycan is attached at Ser-113. Thr-116 carries the phosphothreonine modification. Residues Lys-117 and Lys-121 each carry the N6-(2-hydroxyisobutyryl)lysine; alternate modification. N6-(beta-hydroxybutyryl)lysine; alternate occurs at positions 117 and 121. N6-lactoyllysine; alternate is present on residues Lys-117 and Lys-121. Lys-117 and Lys-121 each carry N6-glutaryllysine; alternate. N6-succinyllysine; alternate is present on residues Lys-117 and Lys-121. Lys-117 is subject to N6-malonyllysine; alternate. An N6-methylated lysine; alternate modification is found at Lys-117. Lys-121 is covalently cross-linked (Glycyl lysine isopeptide (Lys-Gly) (interchain with G-Cter in ubiquitin); alternate).

The protein belongs to the histone H2B family. As to quaternary structure, the nucleosome is a histone octamer containing two molecules each of H2A, H2B, H3 and H4 assembled in one H3-H4 heterotetramer and two H2A-H2B heterodimers. The octamer wraps approximately 147 bp of DNA. Heterodimer H2BC11 and H2AZ1 interacts with VPS72 (via N-terminal domain). Monoubiquitination at Lys-35 (H2BK34Ub) by the MSL1/MSL2 dimer is required for histone H3 'Lys-4' (H3K4me) and 'Lys-79' (H3K79me) methylation and transcription activation at specific gene loci, such as HOXA9 and MEIS1 loci. Similarly, monoubiquitination at Lys-121 (H2BK120Ub) by the RNF20/40 complex gives a specific tag for epigenetic transcriptional activation and is also prerequisite for histone H3 'Lys-4' and 'Lys-79' methylation. It also functions cooperatively with the FACT dimer to stimulate elongation by RNA polymerase II. H2BK120Ub also acts as a regulator of mRNA splicing: deubiquitination by USP49 is required for efficient cotranscriptional splicing of a large set of exons. In terms of processing, phosphorylation at Ser-37 (H2BS36ph) by AMPK in response to stress promotes transcription. Phosphorylated on Ser-15 (H2BS14ph) by STK4/MST1 during apoptosis; which facilitates apoptotic chromatin condensation. Also phosphorylated on Ser-15 in response to DNA double strand breaks (DSBs), and in correlation with somatic hypermutation and immunoglobulin class-switch recombination. Post-translationally, glcNAcylation at Ser-113 promotes monoubiquitination of Lys-121. It fluctuates in response to extracellular glucose, and associates with transcribed genes. ADP-ribosylated by PARP1 or PARP2 on Ser-7 (H2BS6ADPr) in response to DNA damage. H2BS6ADPr promotes recruitment of CHD1L. Mono-ADP-ribosylated on Glu-3 (H2BE2ADPr) by PARP3 in response to single-strand breaks. Poly ADP-ribosylation on Glu-36 (H2BE35ADPr) by PARP1 regulates adipogenesis: it inhibits phosphorylation at Ser-37 (H2BS36ph), thereby blocking expression of pro-adipogenetic genes. In terms of processing, crotonylation (Kcr) is specifically present in male germ cells and marks testis-specific genes in post-meiotic cells, including X-linked genes that escape sex chromosome inactivation in haploid cells. Crotonylation marks active promoters and enhancers and confers resistance to transcriptional repressors. It is also associated with post-meiotically activated genes on autosomes. Post-translationally, lactylated in macrophages by EP300/P300 by using lactoyl-CoA directly derived from endogenous or exogenous lactate, leading to stimulates gene transcription.

The protein localises to the nucleus. Its subcellular location is the chromosome. Core component of nucleosome. Nucleosomes wrap and compact DNA into chromatin, limiting DNA accessibility to the cellular machineries which require DNA as a template. Histones thereby play a central role in transcription regulation, DNA repair, DNA replication and chromosomal stability. DNA accessibility is regulated via a complex set of post-translational modifications of histones, also called histone code, and nucleosome remodeling. In terms of biological role, has broad antibacterial activity. May contribute to the formation of the functional antimicrobial barrier of the colonic epithelium, and to the bactericidal activity of amniotic fluid. This Homo sapiens (Human) protein is Histone H2B type 1-J.